Here is a 331-residue protein sequence, read N- to C-terminus: Biotin synthase (331 aa).

Positions 52-277 (PDVEVEGIIS…RTMLRFAGGR (226 aa)) constitute a Radical SAM core domain. Positions 67, 71, and 74 each coordinate [4Fe-4S] cluster. Residues C110, C143, C202, and R272 each coordinate [2Fe-2S] cluster.

This sequence belongs to the radical SAM superfamily. Biotin synthase family. As to quaternary structure, homodimer. [4Fe-4S] cluster is required as a cofactor. Requires [2Fe-2S] cluster as cofactor.

It catalyses the reaction (4R,5S)-dethiobiotin + (sulfur carrier)-SH + 2 reduced [2Fe-2S]-[ferredoxin] + 2 S-adenosyl-L-methionine = (sulfur carrier)-H + biotin + 2 5'-deoxyadenosine + 2 L-methionine + 2 oxidized [2Fe-2S]-[ferredoxin]. It participates in cofactor biosynthesis; biotin biosynthesis; biotin from 7,8-diaminononanoate: step 2/2. Functionally, catalyzes the conversion of dethiobiotin (DTB) to biotin by the insertion of a sulfur atom into dethiobiotin via a radical-based mechanism. The protein is Biotin synthase of Mycobacterium sp. (strain JLS).